Reading from the N-terminus, the 552-residue chain is Membrane protein insertase YidC (552 aa).

A helical transmembrane segment spans residues 6-26; that stretch reads NLLLAAIAAVILMLFIRWNHF. Polar residues-rich tracts occupy residues 32-41 and 60-70; these read QHQAGNTPAG and PTASDTPQATA. A disordered region spans residues 32 to 70; it reads QHQAGNTPAGSSIAAIAPDSNGDIPSAVPTASDTPQATA. A run of 4 helical transmembrane segments spans residues 365 to 387, 431 to 451, 472 to 492, and 508 to 528; these read WGLA…SAAS, FGGC…YWVL, MDPY…MQKL, and LPFV…LYWV.

It belongs to the OXA1/ALB3/YidC family. Type 1 subfamily. As to quaternary structure, interacts with the Sec translocase complex via SecD. Specifically interacts with transmembrane segments of nascent integral membrane proteins during membrane integration.

It localises to the cell inner membrane. Its function is as follows. Required for the insertion and/or proper folding and/or complex formation of integral membrane proteins into the membrane. Involved in integration of membrane proteins that insert both dependently and independently of the Sec translocase complex, as well as at least some lipoproteins. Aids folding of multispanning membrane proteins. In Cellvibrio japonicus (strain Ueda107) (Pseudomonas fluorescens subsp. cellulosa), this protein is Membrane protein insertase YidC.